Here is a 197-residue protein sequence, read N- to C-terminus: Nucleoside triphosphate pyrophosphatase (197 aa).

Asp71 serves as the catalytic Proton acceptor.

The protein belongs to the Maf family. It depends on a divalent metal cation as a cofactor.

It localises to the cytoplasm. It catalyses the reaction a ribonucleoside 5'-triphosphate + H2O = a ribonucleoside 5'-phosphate + diphosphate + H(+). The catalysed reaction is a 2'-deoxyribonucleoside 5'-triphosphate + H2O = a 2'-deoxyribonucleoside 5'-phosphate + diphosphate + H(+). Functionally, nucleoside triphosphate pyrophosphatase. May have a dual role in cell division arrest and in preventing the incorporation of modified nucleotides into cellular nucleic acids. This Trichormus variabilis (strain ATCC 29413 / PCC 7937) (Anabaena variabilis) protein is Nucleoside triphosphate pyrophosphatase.